Here is a 251-residue protein sequence, read N- to C-terminus: Probable transcriptional regulatory protein Arth_2304 (251 aa).

The protein belongs to the TACO1 family.

Its subcellular location is the cytoplasm. This Arthrobacter sp. (strain FB24) protein is Probable transcriptional regulatory protein Arth_2304.